A 33-amino-acid polypeptide reads, in one-letter code: Photosystem II reaction center protein Psb30 (33 aa).

Residues 5-25 (VIAQLTMLTIAVITGPLVIFF) traverse the membrane as a helical segment.

This sequence belongs to the Psb30/Ycf12 family. In terms of assembly, PSII is composed of 1 copy each of membrane proteins PsbA, PsbB, PsbC, PsbD, PsbE, PsbF, PsbH, PsbI, PsbJ, PsbK, PsbL, PsbM, PsbT, PsbX, PsbY, PsbZ, Psb30/Ycf12, peripheral proteins of the oxygen-evolving complex and a large number of cofactors. It forms dimeric complexes.

The protein localises to the plastid. It localises to the chloroplast thylakoid membrane. Its function is as follows. A core subunit of photosystem II (PSII), probably helps stabilize the reaction center. This Welwitschia mirabilis (Tree tumbo) protein is Photosystem II reaction center protein Psb30.